A 156-amino-acid polypeptide reads, in one-letter code: Small ribosomal subunit protein bS18c (156 aa).

The tract at residues 1-54 is disordered; the sequence is MYTSKQPFLKSKQPFRKSKQPFRKSKQPFRKFKKPFRKSKQPFRRRPRIGPGDR. Basic residues predominate over residues 13 to 48; the sequence is QPFRKSKQPFRKSKQPFRKFKKPFRKSKQPFRRRPR.

This sequence belongs to the bacterial ribosomal protein bS18 family. In terms of assembly, part of the 30S ribosomal subunit.

The protein localises to the plastid. The protein resides in the chloroplast. In Lolium perenne (Perennial ryegrass), this protein is Small ribosomal subunit protein bS18c.